The following is a 230-amino-acid chain: Orotidine 5'-phosphate decarboxylase (230 aa).

Residues D10, K32, 59–68, T119, R180, Q189, G209, and R210 contribute to the substrate site; that span reads DLKYHDIPNT. Catalysis depends on K61, which acts as the Proton donor.

This sequence belongs to the OMP decarboxylase family. Type 1 subfamily. Homodimer.

The catalysed reaction is orotidine 5'-phosphate + H(+) = UMP + CO2. The protein operates within pyrimidine metabolism; UMP biosynthesis via de novo pathway; UMP from orotate: step 2/2. Catalyzes the decarboxylation of orotidine 5'-monophosphate (OMP) to uridine 5'-monophosphate (UMP). This chain is Orotidine 5'-phosphate decarboxylase, found in Haemophilus influenzae (strain ATCC 51907 / DSM 11121 / KW20 / Rd).